A 960-amino-acid chain; its full sequence is Dynamin-like GTPase OPA1, mitochondrial (960 aa).

The transit peptide at 1–87 directs the protein to the mitochondrion; that stretch reads MWRAGRAAVA…IKYGYQPRRN (87 aa). Topologically, residues 88 to 96 are mitochondrial matrix; it reads FWPARLAAR. Residues 97–113 traverse the membrane as a helical segment; that stretch reads LLKLRYIILGSAVGGGY. The Mitochondrial intermembrane segment spans residues 114–770; it reads TAKKTFDEWK…NAIENMIGPD (657 aa). The stretch at 210-254 forms a coiled coil; the sequence is SDKEKIDQLQEELLHTQLKYQRILERLEKENKELRKLVLQKDDKG. The LQQQIQ motif motif lies at 217–222; sequence QLQEEL. N6-acetyllysine is present on Lys228. Residues 285 to 561 enclose the Dynamin-type G domain; the sequence is QDHLPRVVVV…FWKMVRESVE (277 aa). The G1 motif stretch occupies residues 295–302; the sequence is GDQSAGKT. Residues Ser298, Gly300, Lys301, Thr302, Ser303, and Gly317 each coordinate GTP. Residue Thr302 coordinates Mg(2+). Positions 321 to 324 are G2 motif; sequence MMTR. 2 residues coordinate Mg(2+): Thr323 and Asp398. A G3 motif region spans residues 398 to 401; the sequence is DLPG. The segment at 467-470 is G4 motif; the sequence is TKVD. Residues Lys468, Asp470, and Thr503 each contribute to the GTP site. Residues 501–504 are G5 motif; it reads VVTG. 2 stalk region regions span residues 589-836 and 874-928; these read DRNE…IKDT and CNDV…VKLL. The tract at residues 736–856 is paddle region; that stretch reads SDKQQWDAAI…KTALNHCNLC (121 aa). The stretch at 771 to 781 is an intramembrane region; that stretch reads WKKRWMYWKNR. Topologically, residues 782–960 are mitochondrial intermembrane; the sequence is TQEQCVHNET…AFIEALHQEK (179 aa). The cysteines at positions 856 and 874 are disulfide-linked. Positions 895 to 960 form a coiled coil; that stretch reads RQQLTNTEVR…AFIEALHQEK (66 aa).

This sequence belongs to the TRAFAC class dynamin-like GTPase superfamily. Dynamin/Fzo/YdjA family. As to quaternary structure, oligomeric complex consisting of membrane-bound and soluble forms of OPA1. Interacts with RCC1L; RCC1L acts as a guanine nucleotide exchange factor (GEF) for OPA1 by exchanging bound GDP for free GTP. Interacts with CHCHD3 and IMMT; these interactions occur preferentially with soluble OPA1 forms. Interacts with PRELID1. Cleaved by OMA1 or YME1L downstream of the transmembrane region in response to different signals to generate soluble forms. Cleaved by OMA1 at position S1 following stress conditions, generating the short soluble form (Dynamin-like GTPase OPA1, short form; S-OPA1). AFG3L2 is involved in the regulation of OMA1-dependent processing of OPA1. PARL-dependent proteolytic processing releases an antiapoptotic soluble form not required for mitochondrial fusion. In terms of processing, cleavage at position S2 by YME1L is required to mediate oxidative phosphorylation (OXPHOS)-induced mitochondrial fusion. Cleavage occurs in the sequence motif Leu-Gln-Gln-Gln-Ile-Gln (LQQQIQ). Post-translationally, cleavage at position S3 by YME1L is required for membrane tubulation. As to expression, detected in brain (at protein level). Detected in brain, brain stem, heart, kidney, liver and skeletal muscle.

Its subcellular location is the mitochondrion inner membrane. It localises to the mitochondrion intermembrane space. It catalyses the reaction GTP + H2O = GDP + phosphate + H(+). Its activity is regulated as follows. Activated by guanine nucleotide exchange factor RCC1L. Functionally, dynamin-related GTPase that is essential for normal mitochondrial morphology by mediating fusion of the mitochondrial inner membranes, regulating cristae morphology and maintaining respiratory chain function. Exists in two forms: the transmembrane, long form (Dynamin-like GTPase OPA1, long form; L-OPA1), which is tethered to the inner mitochondrial membrane, and the short soluble form (Dynamin-like GTPase OPA1, short form; S-OPA1), which results from proteolytic cleavage and localizes in the intermembrane space. Both forms (L-OPA1 and S-OPA1) cooperate to catalyze the fusion of the mitochondrial inner membrane. The equilibrium between L-OPA1 and S-OPA1 is essential: excess levels of S-OPA1, produced by cleavage by OMA1 following loss of mitochondrial membrane potential, lead to an impaired equilibrium between L-OPA1 and S-OPA1, inhibiting mitochondrial fusion. The balance between L-OPA1 and S-OPA1 also influences cristae shape and morphology. Involved in remodeling cristae and the release of cytochrome c during apoptosis. Proteolytic processing by PARL in response to intrinsic apoptotic signals may lead to disassembly of OPA1 oligomers and release of the caspase activator cytochrome C (CYCS) into the mitochondrial intermembrane space. Acts as a regulator of T-helper Th17 cells, which are characterized by cells with fused mitochondria with tight cristae, by mediating mitochondrial membrane remodeling: OPA1 is required for interleukin-17 (IL-17) production. Its role in mitochondrial morphology is required for mitochondrial genome maintenance. Constitutes the transmembrane long form (L-OPA1) that plays a central role in mitochondrial inner membrane fusion and cristae morphology. L-OPA1 and the soluble short form (S-OPA1) form higher-order helical assemblies that coordinate the fusion of mitochondrial inner membranes. Inner membrane-anchored L-OPA1 molecules initiate membrane remodeling by recruiting soluble S-OPA1 to rapidly polymerize into a flexible cylindrical scaffold encaging the mitochondrial inner membrane. Once at the membrane surface, the formation of S-OPA1 helices induce bilayer curvature. OPA1 dimerization through the paddle region, which inserts into cardiolipin-containing membrane, promotes GTP hydrolysis and the helical assembly of a flexible OPA1 lattice on the membrane, which drives membrane curvature and mitochondrial fusion. Plays a role in the maintenance and remodeling of mitochondrial cristae, some invaginations of the mitochondrial inner membrane that provide an increase in the surface area. Probably acts by forming helical filaments at the inside of inner membrane tubes with the shape and dimensions of crista junctions. The equilibrium between L-OPA1 and S-OPA1 influences cristae shape and morphology: increased L-OPA1 levels promote cristae stacking and elongated mitochondria, while increased S-OPA1 levels correlated with irregular cristae packing and round mitochondria shape. In terms of biological role, constitutes the soluble short form (S-OPA1) generated by cleavage by OMA1, which plays a central role in mitochondrial inner membrane fusion and cristae morphology. The transmembrane long form (L-OPA1) and the S-OPA1 form higher-order helical assemblies that coordinate the fusion of mitochondrial inner membranes. Inner membrane-anchored L-OPA1 molecules initiate membrane remodeling by recruiting soluble S-OPA1 to rapidly polymerize into a flexible cylindrical scaffold encaging the mitochondrial inner membrane. Once at the membrane surface, the formation of S-OPA1 helices induce bilayer curvature. OPA1 dimerization through the paddle region, which inserts into cardiolipin-containing membrane, promotes GTP hydrolysis and the helical assembly of a flexible OPA1 lattice on the membrane, which drives membrane curvature and mitochondrial fusion. Excess levels of S-OPA1 produced by cleavage by OMA1 following stress conditions that induce loss of mitochondrial membrane potential, lead to an impaired equilibrium between L-OPA1 and S-OPA1, thereby inhibiting mitochondrial fusion. Involved in mitochondrial safeguard in response to transient mitochondrial membrane depolarization by mediating flickering: cleavage by OMA1 leads to excess production of S-OPA1, preventing mitochondrial hyperfusion. Plays a role in the maintenance and remodeling of mitochondrial cristae, some invaginations of the mitochondrial inner membrane that provide an increase in the surface area. Probably acts by forming helical filaments at the inside of inner membrane tubes with the shape and dimensions of crista junctions. The equilibrium between L-OPA1 and S-OPA1 influences cristae shape and morphology: increased L-OPA1 levels promote cristae stacking and elongated mitochondria, while increased S-OPA1 levels correlated with irregular cristae packing and round mitochondria shape. Its function is as follows. Isoforms that contain the alternative exon 4b are required for mitochondrial genome maintenance, possibly by anchoring the mitochondrial nucleoids to the inner mitochondrial membrane. The polypeptide is Dynamin-like GTPase OPA1, mitochondrial (Mus musculus (Mouse)).